The following is a 680-amino-acid chain: Translation factor GUF1 homolog, chloroplastic (680 aa).

Residues M1–P51 constitute a chloroplast transit peptide. The segment at M1–R68 is disordered. Pro residues predominate over residues A28–P37. Residues R38–S60 are compositionally biased toward low complexity. One can recognise a tr-type G domain in the interval S75–Q256. Residues A84–S91, D149–H153, and N203–D206 contribute to the GTP site.

The protein belongs to the TRAFAC class translation factor GTPase superfamily. Classic translation factor GTPase family. LepA subfamily.

It localises to the plastid. The protein resides in the chloroplast. The enzyme catalyses GTP + H2O = GDP + phosphate + H(+). Functionally, promotes chloroplast protein synthesis. May act as a fidelity factor of the translation reaction, by catalyzing a one-codon backward translocation of tRNAs on improperly translocated ribosomes. This is Translation factor GUF1 homolog, chloroplastic from Oryza sativa subsp. japonica (Rice).